Here is a 559-residue protein sequence, read N- to C-terminus: Kelch repeat and BTB domain-containing protein 2 (559 aa).

The BTB domain maps to cysteine 26–asparagine 95. The BACK domain maps to cysteine 128 to lysine 223. Kelch repeat units lie at residues glutamate 305–aspartate 352, methionine 353–glutamine 399, and isoleucine 401–aspartate 463.

As to quaternary structure, interacts (via BTB domain) with host CUL3.

It localises to the host cytoplasm. Probable substrate-specific adapter of CUL3-containing E3 ubiquitin-protein ligases which mediate the ubiquitination and subsequent proteasomal degradation of host target proteins. The chain is Kelch repeat and BTB domain-containing protein 2 (KBTB2) from Mus musculus (Mouse).